The chain runs to 511 residues: Cobyric acid synthase (511 aa).

The 193-residue stretch at 251–443 (LLDIAIICLP…IHGIFDNDIF (193 aa)) folds into the GATase cobBQ-type domain. Catalysis depends on Cys332, which acts as the Nucleophile. His435 is an active-site residue.

Belongs to the CobB/CobQ family. CobQ subfamily.

The protein operates within cofactor biosynthesis; adenosylcobalamin biosynthesis. Functionally, catalyzes amidations at positions B, D, E, and G on adenosylcobyrinic A,C-diamide. NH(2) groups are provided by glutamine, and one molecule of ATP is hydrogenolyzed for each amidation. The protein is Cobyric acid synthase of Listeria innocua serovar 6a (strain ATCC BAA-680 / CLIP 11262).